A 220-amino-acid chain; its full sequence is Small ribosomal subunit protein eS8 (220 aa).

It belongs to the eukaryotic ribosomal protein eS8 family.

In Leishmania major, this protein is Small ribosomal subunit protein eS8 (RPS8A).